A 603-amino-acid chain; its full sequence is Pyruvate oxidase (603 aa).

The interval 1 to 191 is core; the sequence is MVMKQTKQTN…WYASANSYQT (191 aa). Residues 192 to 342 form an FAD-binding region; that stretch reads PLLPEPDVQA…ILAQVSERES (151 aa). Positions 343–603 are thiamine pyrophosphate binding; that stretch reads TPWWQANLAN…LQHQIGQGGF (261 aa). Residues D447, N474, and Q476 each contribute to the Mg(2+) site.

Belongs to the TPP enzyme family. In terms of assembly, homotetramer. FAD serves as cofactor. The cofactor is Mg(2+). Requires thiamine diphosphate as cofactor.

It carries out the reaction pyruvate + phosphate + O2 + H(+) = acetyl phosphate + H2O2 + CO2. Functionally, important for the aerobic growth. Decarboxylates pyruvate in four steps. The energy released is partially stored in acetyl phosphate. The polypeptide is Pyruvate oxidase (pox5) (Lactiplantibacillus plantarum (strain ATCC BAA-793 / NCIMB 8826 / WCFS1) (Lactobacillus plantarum)).